The chain runs to 236 residues: Phosphoribosylaminoimidazole-succinocarboxamide synthase (236 aa).

The protein belongs to the SAICAR synthetase family.

It catalyses the reaction 5-amino-1-(5-phospho-D-ribosyl)imidazole-4-carboxylate + L-aspartate + ATP = (2S)-2-[5-amino-1-(5-phospho-beta-D-ribosyl)imidazole-4-carboxamido]succinate + ADP + phosphate + 2 H(+). It functions in the pathway purine metabolism; IMP biosynthesis via de novo pathway; 5-amino-1-(5-phospho-D-ribosyl)imidazole-4-carboxamide from 5-amino-1-(5-phospho-D-ribosyl)imidazole-4-carboxylate: step 1/2. The sequence is that of Phosphoribosylaminoimidazole-succinocarboxamide synthase from Coprothermobacter proteolyticus (strain ATCC 35245 / DSM 5265 / OCM 4 / BT).